Reading from the N-terminus, the 278-residue chain is Digeranylgeranylglyceryl phosphate synthase (278 aa).

A run of 7 helical transmembrane segments spans residues 12 to 32 (LKNCLTAGFGALISGLIASNF), 34 to 54 (FGALFPLILAFLVVFFICGFG), 92 to 112 (IMIFGLIISLFNIYCFLMAVL), 129 to 149 (IIGNMLVAYLTGSVFIFGGIA), 199 to 219 (IYISLGLLLIAIGLSFLPYLT), 221 to 241 (IFGIYYLLMILICNLMFLAGF), and 257 to 277 (SKNIKLITNFVLIAFIIGSIF).

The protein belongs to the UbiA prenyltransferase family. DGGGP synthase subfamily. Mg(2+) serves as cofactor.

The protein resides in the cell membrane. The catalysed reaction is sn-3-O-(geranylgeranyl)glycerol 1-phosphate + (2E,6E,10E)-geranylgeranyl diphosphate = 2,3-bis-O-(geranylgeranyl)-sn-glycerol 1-phosphate + diphosphate. Its pathway is membrane lipid metabolism; glycerophospholipid metabolism. Prenyltransferase that catalyzes the transfer of the geranylgeranyl moiety of geranylgeranyl diphosphate (GGPP) to the C2 hydroxyl of (S)-3-O-geranylgeranylglyceryl phosphate (GGGP). This reaction is the second ether-bond-formation step in the biosynthesis of archaeal membrane lipids. The polypeptide is Digeranylgeranylglyceryl phosphate synthase (Methanococcus vannielii (strain ATCC 35089 / DSM 1224 / JCM 13029 / OCM 148 / SB)).